We begin with the raw amino-acid sequence, 420 residues long: Glutamyl-tRNA reductase (420 aa).

Residues 49-52 (TCNR), serine 109, 114-116 (EPQ), and glutamine 120 contribute to the substrate site. Residue cysteine 50 is the Nucleophile of the active site. NADP(+) is bound at residue 189–194 (GAGETI).

It belongs to the glutamyl-tRNA reductase family. Homodimer.

It carries out the reaction (S)-4-amino-5-oxopentanoate + tRNA(Glu) + NADP(+) = L-glutamyl-tRNA(Glu) + NADPH + H(+). Its pathway is porphyrin-containing compound metabolism; protoporphyrin-IX biosynthesis; 5-aminolevulinate from L-glutamyl-tRNA(Glu): step 1/2. Functionally, catalyzes the NADPH-dependent reduction of glutamyl-tRNA(Glu) to glutamate 1-semialdehyde (GSA). In Yersinia enterocolitica serotype O:8 / biotype 1B (strain NCTC 13174 / 8081), this protein is Glutamyl-tRNA reductase.